Consider the following 501-residue polypeptide: Solute carrier family 2, facilitated glucose transporter member 5 (501 aa).

N-acetylmethionine is present on Met-1. Over 1–18 (MEQQDQSMKEGRLTLVLA) the chain is Cytoplasmic. Residues 19–39 (LATLIAAFGSSFQYGYNVAAV) traverse the membrane as a helical segment. Residue Tyr-32 participates in D-fructose binding. At 40-68 (NSPALLMQQFYNETYYGRTGEFMEDFPLT) the chain is on the extracellular side. N-linked (GlcNAc...) asparagine glycosylation occurs at Asn-51. A helical transmembrane segment spans residues 69–91 (LLWSVTVSMFPFGGFIGSLLVGP). At 92–98 (LVNKFGR) the chain is on the cytoplasmic side. The chain crosses the membrane as a helical span at residues 99–119 (KGALLFNNIFSIVPAILMGCS). Topologically, residues 120–126 (RVATSFE) are extracellular. A helical membrane pass occupies residues 127-149 (LIIISRLLVGICAGVSSNVVPMY). Over 150–161 (LGELAPKNLRGA) the chain is Cytoplasmic. The helical transmembrane segment at 162–182 (LGVVPQLFITVGILVAQIFGL) threads the bilayer. Gln-167 provides a ligand contact to D-fructose. The Extracellular segment spans residues 183-192 (RNLLANVDGW). The chain crosses the membrane as a helical span at residues 193 to 213 (PILLGLTGVPAALQLLLLPFF). The Cytoplasmic segment spans residues 214–277 (PESPRYLLIQ…LFRMRSLRWQ (64 aa)). Residues 278–298 (LLSIIVLMGGQQLSGVNAIYY) form a helical membrane-spanning segment. D-fructose contacts are provided by residues Gln-288 and 296–298 (IYY). At 299–313 (YADQIYLSAGVPEEH) the chain is on the extracellular side. Residues 314–334 (VQYVTAGTGAVNVVMTFCAVF) traverse the membrane as a helical segment. Residues 335–342 (VVELLGRR) are Cytoplasmic-facing. Residues 343–363 (LLLLLGFSICLIACCVLTAAL) form a helical membrane-spanning segment. The Extracellular segment spans residues 364–371 (ALQDTVSW). The chain crosses the membrane as a helical span at residues 372 to 394 (MPYISIVCVISYVIGHALGPSPI). His-387 contributes to the D-fructose binding site. Residues 395–412 (PALLITEIFLQSSRPSAF) are Cytoplasmic-facing. A helical membrane pass occupies residues 413–433 (MVGGSVHWLSNFTVGLIFPFI). D-fructose is bound at residue 419-420 (HW). The Extracellular segment spans residues 434 to 439 (QEGLGP). A helical membrane pass occupies residues 440 to 460 (YSFIVFAVICLLTTIYIFLIV). At 461-501 (PETKAKTFIEINQIFTKMNKVSEVYPEKEELKELPPVTSEQ) the chain is on the cytoplasmic side.

As to expression, detected in skeletal muscle, and in jejunum brush border membrane and basolateral membrane (at protein level). Expressed in small intestine, and at much lower levels in kidney, skeletal muscle, and adipose tissue.

It localises to the apical cell membrane. It is found in the cell membrane. The protein resides in the sarcolemma. It catalyses the reaction D-fructose(out) = D-fructose(in). Its activity is regulated as follows. The uptake of 2-deoxyglucose is inhibited by cytochalasin B. Fructose transport is inhibited by the flavonoids epigallocatechin gallate and apigenin but not quercetin. In terms of biological role, functions as a fructose transporter that has only low activity with other monosaccharides. Can mediate the uptake of 2-deoxyglucose, but with low efficiency. Essential for fructose uptake in the small intestine. Plays a role in the regulation of salt uptake and blood pressure in response to dietary fructose. Required for the development of high blood pressure in response to high dietary fructose intake. This is Solute carrier family 2, facilitated glucose transporter member 5 from Homo sapiens (Human).